The primary structure comprises 452 residues: Transcription factor AP-2-delta (452 aa).

Phosphoserine; by PKA is present on serine 239. The H-S-H (helix-span-helix), dimerization stretch occupies residues 280–410; the sequence is RRKAANVTLL…VLSEMLNYLE (131 aa). Positions 416 to 452 are disordered; the sequence is KNGGAADSGQGHANSEKAPLRKASEAAVKEGKTEKTD. Basic and acidic residues predominate over residues 429–452; that stretch reads NSEKAPLRKASEAAVKEGKTEKTD.

The protein belongs to the AP-2 family. In terms of assembly, binds DNA as a dimer. Can form homodimers or heterodimers with other AP-2 family members. In terms of tissue distribution, expressed in both embryonic and newborn brain.

It is found in the nucleus. In terms of biological role, sequence-specific DNA-binding protein that interacts with inducible viral and cellular enhancer elements to regulate transcription of selected genes. AP-2 factors bind to the consensus sequence 5'-GCCNNNGGC-3' and activate genes involved in a large spectrum of important biological functions including proper eye, face, body wall, limb and neural tube development. They also suppress a number of genes including MCAM/MUC18, C/EBP alpha and MYC. The chain is Transcription factor AP-2-delta (Tfap2d) from Mus musculus (Mouse).